The sequence spans 457 residues: UDP-N-acetylmuramate--L-alanine ligase (457 aa).

109–115 (GTDGKTT) provides a ligand contact to ATP.

The protein belongs to the MurCDEF family.

It localises to the cytoplasm. The catalysed reaction is UDP-N-acetyl-alpha-D-muramate + L-alanine + ATP = UDP-N-acetyl-alpha-D-muramoyl-L-alanine + ADP + phosphate + H(+). Its pathway is cell wall biogenesis; peptidoglycan biosynthesis. In terms of biological role, cell wall formation. This Thermotoga sp. (strain RQ2) protein is UDP-N-acetylmuramate--L-alanine ligase.